Here is a 177-residue protein sequence, read N- to C-terminus: Large ribosomal subunit protein uL6 (177 aa).

This sequence belongs to the universal ribosomal protein uL6 family. As to quaternary structure, part of the 50S ribosomal subunit.

This protein binds to the 23S rRNA, and is important in its secondary structure. It is located near the subunit interface in the base of the L7/L12 stalk, and near the tRNA binding site of the peptidyltransferase center. This chain is Large ribosomal subunit protein uL6, found in Vibrio campbellii (strain ATCC BAA-1116).